The sequence spans 72 residues: DNA-directed RNA polymerase subunit Rpo10 (72 aa).

Residues Cys7, Cys10, Cys53, and Cys54 each coordinate Zn(2+).

Belongs to the archaeal Rpo10/eukaryotic RPB10 RNA polymerase subunit family. In terms of assembly, part of the RNA polymerase complex. Requires Zn(2+) as cofactor.

Its subcellular location is the cytoplasm. The enzyme catalyses RNA(n) + a ribonucleoside 5'-triphosphate = RNA(n+1) + diphosphate. Functionally, DNA-dependent RNA polymerase (RNAP) catalyzes the transcription of DNA into RNA using the four ribonucleoside triphosphates as substrates. This Thermoplasma acidophilum (strain ATCC 25905 / DSM 1728 / JCM 9062 / NBRC 15155 / AMRC-C165) protein is DNA-directed RNA polymerase subunit Rpo10.